We begin with the raw amino-acid sequence, 257 residues long: MLAKRIVPCLDVKDGCVVKGVQFRNHEIVGDIVPLAARYAAEGADELVFYDITASAHDRVVDKSWVSRVAEQIDIPFCVAGGIKTIGQARELLAFGADKISVNSPALSDPSLISRLQDEFGRQCIVIGIDSFYDAASDSYKVKQFTGDEAATKETAWYTQDWVEEVQKRGCGEIVLNVMNQDGVRGGYDIKQLSLVRQLCDVPLIASGGAGTMTHFRDVFIEAKVDAALAASVFHKAIINIGELKQYLAAEGIAIRQ.

Residues D11 and D130 contribute to the active site.

Belongs to the HisA/HisF family. Heterodimer of HisH and HisF.

It is found in the cytoplasm. The catalysed reaction is 5-[(5-phospho-1-deoxy-D-ribulos-1-ylimino)methylamino]-1-(5-phospho-beta-D-ribosyl)imidazole-4-carboxamide + L-glutamine = D-erythro-1-(imidazol-4-yl)glycerol 3-phosphate + 5-amino-1-(5-phospho-beta-D-ribosyl)imidazole-4-carboxamide + L-glutamate + H(+). The protein operates within amino-acid biosynthesis; L-histidine biosynthesis; L-histidine from 5-phospho-alpha-D-ribose 1-diphosphate: step 5/9. In terms of biological role, IGPS catalyzes the conversion of PRFAR and glutamine to IGP, AICAR and glutamate. The HisF subunit catalyzes the cyclization activity that produces IGP and AICAR from PRFAR using the ammonia provided by the HisH subunit. The polypeptide is Imidazole glycerol phosphate synthase subunit HisF (Shewanella sp. (strain ANA-3)).